A 320-amino-acid chain; its full sequence is Malate dehydrogenase (320 aa).

NAD(+) is bound by residues 10–15 (GAGQIG) and D34. R83 and R89 together coordinate substrate. Residues N96 and 119–121 (ITN) contribute to the NAD(+) site. Residues N121 and R152 each coordinate substrate. The active-site Proton acceptor is H176.

This sequence belongs to the LDH/MDH superfamily. MDH type 3 family.

It carries out the reaction (S)-malate + NAD(+) = oxaloacetate + NADH + H(+). Functionally, catalyzes the reversible oxidation of malate to oxaloacetate. In Cereibacter sphaeroides (strain ATCC 17025 / ATH 2.4.3) (Rhodobacter sphaeroides), this protein is Malate dehydrogenase.